The following is a 918-amino-acid chain: Band 3 anion exchange protein (918 aa).

The segment at 1–48 (MENDLSFGEDVMSYEEESDSAFPSPIRPTPPGHSGNYDLEQSRQEEDS) is disordered. Residues 1 to 392 (MENDLSFGED…ISDFTDALDP (392 aa)) lie on the Cytoplasmic side of the membrane. The helical transmembrane segment at 393 to 416 (QVLAAVIFIYFAALSPAITFGGLL) threads the bilayer. The Extracellular segment spans residues 417 to 424 (ADKTEHMM). A helical transmembrane segment spans residues 425 to 445 (GVSELMISTCVQGIIFAFIAA). Residues 446-448 (QPT) lie on the Cytoplasmic side of the membrane. Residues 449–465 (LVIGFSGPLLVFEEAFF) traverse the membrane as a discontinuously helical segment. Over 466–474 (AFCKSQEIE) the chain is Extracellular. Residues 475 to 495 (YIVGRIWVGLWLVIIVVVIVA) form a helical membrane-spanning segment. Over 496-507 (VEGSFLVKFISR) the chain is Cytoplasmic. The chain crosses the membrane as a helical span at residues 508–530 (FTQEIFSILISLIFIYETFSKLG). At 531 to 583 (KIFKAHPLVLNYEHLNDSLDNPFHPVVKEHIEYHEDGNKTVHEVIHERAYPNT) the chain is on the extracellular side. N546 and N568 each carry an N-linked (GlcNAc...) asparagine glycan. A helical membrane pass occupies residues 584-604 (ALLSMCLMFGCFFIAYFLRQF). The Cytoplasmic portion of the chain corresponds to 605-615 (KNGHFLPGPIR). The chain crosses the membrane as a helical span at residues 616 to 636 (RMIGDFGVPIAIFFMIAVDIT). Residues 637 to 676 (IEDAYTQKLVVPKGLMVSNPNARGWFINPLGEKKPFPAWM) lie on the Extracellular side of the membrane. A helical transmembrane segment spans residues 677 to 697 (MGACCVPALLVFILIFLESQI). At 698–713 (TTLIVSKPERKMVKGS) the chain is on the cytoplasmic side. The chain crosses the membrane as a helical span at residues 714–732 (GFHLDLLILVTMGGIASLF). Residues 733–750 (GVPWLSAATVRSVTHANA) traverse the membrane as a discontinuously helical segment. The Cytoplasmic segment spans residues 751–769 (LTVMSKGPKPEIEKVLEQR). The next 2 membrane-spanning stretches (helical) occupy residues 770 to 790 (ISGM…PILK) and 791 to 809 (MIPM…ITSL). The Cytoplasmic segment spans residues 810-847 (SGIQMWDRMLLLIVPRKYYPADAYAQRVTTMKMHLFTL). Positions 848-878 (IQMVCLGALWMVKMSAFSLALPFVLILTIPL) form an intramembrane region, discontinuously helical. C852 carries the S-palmitoyl cysteine lipid modification. Topologically, residues 879 to 918 (RMAITGTLFTDKEMKCLDASDGKVKFEEEPGEDMYESPLP) are cytoplasmic.

It belongs to the anion exchanger (TC 2.A.31) family. In terms of assembly, a dimer in solution, it spans the membrane asymmetrically and appears to be tetrameric.

It is found in the cell membrane. The enzyme catalyses hydrogencarbonate(in) + chloride(out) = hydrogencarbonate(out) + chloride(in). Functions both as a transporter that mediates electroneutral anion exchange across the cell membrane and as a structural protein. Major integral membrane glycoprotein of the erythrocyte membrane; required for normal flexibility and stability of the erythrocyte membrane and for normal erythrocyte shape via the interactions of its cytoplasmic domain with cytoskeletal proteins, glycolytic enzymes, and hemoglobin. Functions as a transporter that mediates the 1:1 exchange of inorganic anions across the erythrocyte membrane. Mediates chloride-bicarbonate exchange in the kidney, and is required for normal acidification of the urine. The chain is Band 3 anion exchange protein (slc4a1) from Oncorhynchus mykiss (Rainbow trout).